A 77-amino-acid chain; its full sequence is UPF0270 protein Spro_4577 (77 aa).

Belongs to the UPF0270 family.

The polypeptide is UPF0270 protein Spro_4577 (Serratia proteamaculans (strain 568)).